Here is a 213-residue protein sequence, read N- to C-terminus: MDLTDTQQAILALIAERIDADGVPPSQTEIARAFGFKGIRAAQYHLEALEHAGAIRRVPGQARGIRLAGQGAQTRTAPVSEVARDDVLRLPVLGRVAAGLPIGADIGSDDFVVLDRVFFSPSPDYLLKVQGDSMRDEGIFNGDLIGVHRTRDARSGQIVVARIDEEITVKLLKIGKDRIRLLPRNPDYAPIEVLPDQDFAIEGLYCGLLRPNR.

The segment at residues 27–47 is a DNA-binding region (H-T-H motif); that stretch reads QTEIARAFGFKGIRAAQYHLE. Catalysis depends on for autocatalytic cleavage activity residues serine 133 and lysine 170.

It belongs to the peptidase S24 family. Homodimer.

It carries out the reaction Hydrolysis of Ala-|-Gly bond in repressor LexA.. Functionally, represses a number of genes involved in the response to DNA damage (SOS response), including recA and lexA. Has been shown to bind to the palindromic sequence 5'-CTG-N(8-12)-C-[TC]-G. In the presence of single-stranded DNA, RecA interacts with LexA causing an autocatalytic cleavage which disrupts the DNA-binding part of LexA, leading to derepression of the SOS regulon and eventually DNA repair. This chain is LexA repressor, found in Xanthomonas citri (Xanthomonas campestris pv. citri).